A 362-amino-acid polypeptide reads, in one-letter code: Peptide chain release factor 1 (362 aa).

Gln-235 is subject to N5-methylglutamine.

This sequence belongs to the prokaryotic/mitochondrial release factor family. In terms of processing, methylated by PrmC. Methylation increases the termination efficiency of RF1.

Its subcellular location is the cytoplasm. In terms of biological role, peptide chain release factor 1 directs the termination of translation in response to the peptide chain termination codons UAG and UAA. The protein is Peptide chain release factor 1 of Buchnera aphidicola subsp. Baizongia pistaciae (strain Bp).